Consider the following 138-residue polypeptide: Large ribosomal subunit protein uL16 (138 aa).

This sequence belongs to the universal ribosomal protein uL16 family. In terms of assembly, part of the 50S ribosomal subunit.

Binds 23S rRNA and is also seen to make contacts with the A and possibly P site tRNAs. The sequence is that of Large ribosomal subunit protein uL16 from Hyphomonas neptunium (strain ATCC 15444).